We begin with the raw amino-acid sequence, 1153 residues long: MALKMVKGSIDRMFDKNLQDLVRGIRNHKEDEAKYISQCIDEIKQELKQDNIAVKANAVCKLTYLQMLGYDISWAAFNIIEVMSASKFTFKRIGYLAASQSFHEGTDVIMLTTNQIRKDLSSPSQYDTGVALTGLSCFVTPDLARDLANDIMTLMSHTKPYIRKKAVLIMYKVFLKYPESLRPAFPRLKEKLEDPDPGVQSAAVNVICELARRNPKNYLSLAPLFFKLMTSSTNNWVLIKIIKLFGALTPLEPRLGKKLIEPLTNLIHSTSAMSLLYECVNTVIAVLISLSSGMPNHSASIQLCVQKLRILIEDSDQNLKYLGLLAMSKILKTHPKSVQSHKDLILQCLDDKDESIRLRALDLLYGMVSKKNLMEIVKKLMTHVDKAEGTTYRDELLTKIIDICSQSNYQYITNFEWYISILVELTRLEGTRHGHLIAAQMLDVAIRVKAIRKFAVSQMSALLDSAHLLASSTQRNGICEVLYAAAWICGEFSEHLQEPHHTLEAMLRPRVTTLPGHIQAVYVQNVVKLYASILQQKEQAGEAEGAQAVTQLMVDRLPQFVQSADLEVQERASCILQLVKHIQKLQAKDVPVAEEVSALFAGELNPVAPKAQKKVPVPEGLDLDAWINEPLSDSESEDERPRAVFHEEEQRRPKHRPSEADEEELARRREARKQEQANNPFYIKSSPSPQKRYQDTPGVEHIPVVQIDLSVPLKVPGLPMSDQYVKLEEERRHRQKLEKDKRRKKRKEKEKKGKRRHSSLPTESDEDIAPAQQVDIVTEEMPENALPSDEDDKDPNDPYRALDIDLDKPLADSEKLPIQKHRNTETSKSPEKDVPMVEKKSKKPKKKEKKHKEKERDKEKKKEKEKKKSPKPKKKKHRKEKEERTKGKKKSKKQPPGSEEAAGEPVQNGAPEEEQLPPESSYSLLAENSYVKMTCDIRGSLQEDSQVTVAIVLENRSSSILKGMELSVLDSLNARMARPQGSSVHDGVPVPFQLPPGVSNEAQYVFTIQSIVMAQKLKGTLSFIAKNDEGATHEKLDFRLHFSCSSYLITTPCYSDAFAKLLESGDLSMSSIKVDGIRMSFQNLLAKICFHHHFSVVERVDSCASMYSRSIQGHHVCLLVKKGENSVSVDGKCSDSTLLSNLLEEMKATLAKC.

N-acetylalanine is present on Ala2. HEAT repeat units lie at residues 34 to 71, 77 to 114, 142 to 179, 180 to 216, 254 to 292, 299 to 336, 338 to 373, 375 to 409, 431 to 468, 497 to 535, and 548 to 585; these read KYISQCIDEIKQELKQDNIAVKANAVCKLTYLQMLGYD, FNIIEVMSASKFTFKRIGYLAASQSFHEGTDVIMLTTN, DLARDLANDIMTLMSHTKPYIRKKAVLIMYKVFLKYPE, SLRPAFPRLKEKLEDPDPGVQSAAVNVICELARRNPK, RLGKKLIEPLTNLIHSTSAMSLLYECVNTVIAVLISLSS, ASIQLCVQKLRILIEDSDQNLKYLGLLAMSKILKTHPK, VQSHKDLILQCLDDKDESIRLRALDLLYGMVSKKNL, EIVKKLMTHVDKAEGTTYRDELLTKIIDICSQSNY, TRHGHLIAAQMLDVAIRVKAIRKFAVSQMSALLDSAHL, QEPHHTLEAMLRPRVTTLPGHIQAVYVQNVVKLYASILQ, and AVTQLMVDRLPQFVQSADLEVQERASCILQLVKHIQKL. 2 disordered regions span residues 629–696 and 726–920; these read EPLS…YQDT and KLEE…PPES. 4 positions are modified to phosphoserine: Ser632, Ser634, Ser636, and Ser658. Residues 639 to 675 are compositionally biased toward basic and acidic residues; that stretch reads ERPRAVFHEEEQRRPKHRPSEADEEELARRREARKQE. Positions 659–679 form a coiled coil; sequence EADEEELARRREARKQEQANN. Ser688 is modified (phosphoserine). The stretch at 725-756 forms a coiled coil; the sequence is VKLEEERRHRQKLEKDKRRKKRKEKEKKGKRR. Residues 726–740 are compositionally biased toward basic and acidic residues; it reads KLEEERRHRQKLEKD. Over residues 741 to 758 the composition is skewed to basic residues; the sequence is KRRKKRKEKEKKGKRRHS. A phosphoserine mark is found at Ser758 and Ser759. Thr762 is modified (phosphothreonine). 5 positions are modified to phosphoserine: Ser764, Ala785, Ser788, Lys828, and Ser829. The span at 777–794 shows a compositional bias: acidic residues; that stretch reads VTEEMPENALPSDEDDKD. A compositionally biased stretch (basic and acidic residues) spans 795–839; the sequence is PNDPYRALDIDLDKPLADSEKLPIQKHRNTETSKSPEKDVPMVEK. Composition is skewed to basic residues over residues 840 to 853 and 863 to 879; these read KSKKPKKKEKKHKE and EKEKKKSPKPKKKKHRK. The stretch at 845 to 869 forms a coiled coil; it reads KKKEKKHKEKERDKEKKKEKEKKKS. The residue at position 931 (Val931) is a Phosphoserine.

It belongs to the adaptor complexes large subunit family. AP-3 associates with the BLOC-1 complex. Adaptor protein complex 3 (AP-3) is a heterotetramer composed of two large adaptins (delta-type subunit AP3D1 and beta-type subunit AP3B1 or AP3B2), a medium adaptin (mu-type subunit AP3M1 or AP3M2) and a small adaptin (sigma-type subunit APS1 or AP3S2). Interacts with SLC30A2. Interacts with CLN3 (via dileucine motif); this interaction facilitates lysosomal targeting. As to expression, present in all adult tissues examined with the highest levels in skeletal muscle, heart, pancreas and testis.

It is found in the cytoplasm. The protein localises to the golgi apparatus membrane. Functionally, part of the AP-3 complex, an adaptor-related complex which is not clathrin-associated. The complex is associated with the Golgi region as well as more peripheral structures. It facilitates the budding of vesicles from the Golgi membrane and may be directly involved in trafficking to lysosomes. Involved in process of CD8+ T-cell and NK cell degranulation. In concert with the BLOC-1 complex, AP-3 is required to target cargos into vesicles assembled at cell bodies for delivery into neurites and nerve terminals. The protein is AP-3 complex subunit delta-1 (AP3D1) of Homo sapiens (Human).